Consider the following 231-residue polypeptide: Cytochrome c oxidase subunit 2 (231 aa).

Topologically, residues 1 to 14 (MAHPAQLGLQNATS) are mitochondrial intermembrane. The chain crosses the membrane as a helical span at residues 15–45 (PIMEELIAFHDHALMIIFLISSLVLYVISLM). Residues 46–59 (LTTKLTHTSTMNAQ) are Mitochondrial matrix-facing. The helical transmembrane segment at 60-87 (EIEMIWTILPAIILIMIALPSLRILYMT) threads the bilayer. Residues 88–231 (DEFNKPYLTL…WASYLYIVSL (144 aa)) lie on the Mitochondrial intermembrane side of the membrane. Cu cation is bound by residues histidine 161, cysteine 196, glutamate 198, cysteine 200, histidine 204, and methionine 207. Residue glutamate 198 coordinates Mg(2+).

This sequence belongs to the cytochrome c oxidase subunit 2 family. As to quaternary structure, component of the cytochrome c oxidase (complex IV, CIV), a multisubunit enzyme composed of 14 subunits. The complex is composed of a catalytic core of 3 subunits MT-CO1, MT-CO2 and MT-CO3, encoded in the mitochondrial DNA, and 11 supernumerary subunits COX4I, COX5A, COX5B, COX6A, COX6B, COX6C, COX7A, COX7B, COX7C, COX8 and NDUFA4, which are encoded in the nuclear genome. The complex exists as a monomer or a dimer and forms supercomplexes (SCs) in the inner mitochondrial membrane with NADH-ubiquinone oxidoreductase (complex I, CI) and ubiquinol-cytochrome c oxidoreductase (cytochrome b-c1 complex, complex III, CIII), resulting in different assemblies (supercomplex SCI(1)III(2)IV(1) and megacomplex MCI(2)III(2)IV(2)). Found in a complex with TMEM177, COA6, COX18, COX20, SCO1 and SCO2. Interacts with TMEM177 in a COX20-dependent manner. Interacts with COX20. Interacts with COX16. Cu cation is required as a cofactor.

It is found in the mitochondrion inner membrane. It catalyses the reaction 4 Fe(II)-[cytochrome c] + O2 + 8 H(+)(in) = 4 Fe(III)-[cytochrome c] + 2 H2O + 4 H(+)(out). Component of the cytochrome c oxidase, the last enzyme in the mitochondrial electron transport chain which drives oxidative phosphorylation. The respiratory chain contains 3 multisubunit complexes succinate dehydrogenase (complex II, CII), ubiquinol-cytochrome c oxidoreductase (cytochrome b-c1 complex, complex III, CIII) and cytochrome c oxidase (complex IV, CIV), that cooperate to transfer electrons derived from NADH and succinate to molecular oxygen, creating an electrochemical gradient over the inner membrane that drives transmembrane transport and the ATP synthase. Cytochrome c oxidase is the component of the respiratory chain that catalyzes the reduction of oxygen to water. Electrons originating from reduced cytochrome c in the intermembrane space (IMS) are transferred via the dinuclear copper A center (CU(A)) of subunit 2 and heme A of subunit 1 to the active site in subunit 1, a binuclear center (BNC) formed by heme A3 and copper B (CU(B)). The BNC reduces molecular oxygen to 2 water molecules using 4 electrons from cytochrome c in the IMS and 4 protons from the mitochondrial matrix. In Alouatta palliata (Mantled howler monkey), this protein is Cytochrome c oxidase subunit 2 (MT-CO2).